We begin with the raw amino-acid sequence, 3410 residues long: MTKKPGRPGRNRAVNMLKRGASRALGPMIKLKRMLFGLLDGRGPLRMVLAILAFFRFTALKPTAGLLKRWGMMDKVHALSLLKGFKKDLASMTDFVHLPKKKSGVSIIGRMLVFSFTAAVRVTLENGMSLMKIQKADVGKVITIRTDRGENRCIVQAMDVGEDCEDTMKYLCPAIENPSEPDDIDCWCDKADAMVTYGRCSKTRHSRRSRRSTNIAGHADSRLDSRGSVWMDTKKATSYLTKAESWALRNPGYALVAAVLGWSLGTSNAQKVIFTVMILLIAPAYSIRCVGVENRDFIEGVSGGTWVDVVLEHGGCVTIMAPDKPTIDLELTSTIAKSMAVTRTYCVQAQVSELSVETRCPTMGEAHNSKSSDAAYVCKKGFSDRGWGNGCGLFGKGSMETCAKFSCQTKAEGRIIQRENLEYTIHMNVHASQETGHFMNDTIASENKHGAKISITATGPSRTADLGDYGMVTLDCEPRAGLDFDNLYLLTLGRNSWLVNRDWFHDVNLPWIGGAEGHWKNRESLVEFGKTHATKREVLALGSQEGTLQVALAGAMIAKFGSNVATINSGHLKCRLKLDKLKIKGTTYHMCKGSFAFTKTPSDTGHGTVLLELTYSGSDGPCRVPISMSVSLSNIEPVGRMVTVNPIVLSSSPQKTIMIEVEPPFGDSFIIAGTGEPRAHYHWRKSGSSIGAAFATTIKGARRLAVIGDDAWDFGSVGGILNSVGKALHQIFGGMFRTLFGGMSWFTQIMIGALCCWLGINARDRTIAVTFLAVGGVLVFLATSVNADSGCALDLKRKEFKCGNGIFVFNDAEAWSHSYRYHPSTPKKLAGSIVRAIEEGQCGVRSVGRLEHEMWRANAREINAILLENEKNLSVVVLESEYYRKAKNLMPIGDEMPFGWKSWGKKFFEEPQLQNQTFVVDGRVGKECPEEKRSWNNFRIEDFGFGVFTTSVWMEQRTEYTEDCDQKVIGAAVKGELAAHSDLGYWIESRSKNGSWELERAYLLESKSCSWPATHTLWNGGVEESELIIPKSRAGPVSHHNTRKGYHNQIKGPWHLTPLEIRFESCPGTTVVTTEECGNRGPSLRTTTTSGKVISEWCCRSCTMPPLSFRTADGCWYGMEIRPLKEREETMVKSHVSAGRGDGVDNLSLGLLVLTIALQEVMRKRILGRHITWMVIAVFMAMILGGLSYRDLGRYLVLVGAAFAERNSGGDLLHLVLVATFKVKPMALLGFVLGGRWCRRQSLLLSIGAVLVNFALEFQGGYFELVDSLALALLFVKAVVQTDTTSVSLPLLAALAPAGCYTVLGTHRFIMLTLVLVTFLGCKKTASVKKAGTAAVGVVLGMVGMKTIPMLGMLMVTSRARRSWPLHEAMAAVGILCALFGALAETEVDLAGPLAAAGLIVMAYVISGRSNDLSIKKVEDVKWSDEAEVTGESVSYHVSLDVRGDPTLTEDSGPGLEKVLLKVGLMAISGIYPVAIPFALGAWFFLEKRCKRAGALWDIPSPREAKPAKVEDGVYRIFSRKLFGESQIGAGVMVKGTFHTMWHVTRGAVLKAGEGLLEPAWADVRKDLICYGGNWKLEEHWDGNEEVQLIALEPGKKVRHIQTKPGIFKTSEGEIGALDLDCMAGTSGSPIVNKNGEVVGLYGNGVLIKGDRYVSAISQKENVGQEDGAEIEDNWFRKRELTVLDLHPGAGKTRRVLPQLVREAVKKRLRTVILAPTRVVASEMYEALRGEPIRYMTPAVQSERTGNEIVDFMCHSTFTMKLFQGVRVPNYNLYIMDEAHFLDPASVAARGYIETRVSMGDAGAIFMTATPPGTTEAFPPSNSPIIDEETRIPDKAWNSGYEWIIEFDGRTVWFVHSIKQGAEIGTCLQKAGKKVLYLNRKTFESEYPKCKSEKWDFVITTDISEMGANFKADRVIDPRKTIKPILLDGRVSMQGPIAITPASAAQRRGRIGRNPEKLGDIYAYSGNVSSDNEGHVSWTEARMLLDNVHVQGGVVAQLYTPEREKTEAYEGEFKLKTNQRKVFSELIRTGDLPVWLAFQVASANVEYHDRKWCFDGPNEHLLLENNQEIEVWTRQGQRRVLKPRWLDGRITSDHLNLKSFKEFASGKRSALSILDLIAVLPSHLNLRLQEALDTAAILSRSEPGSRSYKAALENSPEMIETFLLCALVCLMTIGLVVVLVRGKGPGKLAFGMVSIGVMTWLLWSAGVDPGKIAAAVILVFLLLVVLIPEPEKQRSVQDNQLAMLMLLIATILGGVAANEMGWLEKTKADLSWVVRGRSSTTTPVVELDMKPATAWTLYALATTLLTPLFQHLIVTKYANISLMAIASQAGTLFSMDSGIPFSSIELSVPLLALGCWTQITPCSLILACVLLSTHYAILLPGMQAQAARDAQRRTAAGIMKNAVVDGIVATDIPPLDGAGPLTEKKLGQLLLFAAAVTGVVITRSPRSWSELGVLGSAVGSTLIEGSAGKFWNATTVTAMCNLFRGSYLAGVPLTYTIIRNSNPSNKRGGGIGETLGEKWKARLNQMNTLEFHRYRRSHIMEVDREPARAALKSGDFTRGAAVSRGSAKLRWMHERGYIRLHDKVVDLGCGRGGWCYYSATVKEVKEVKGYTKGGRGHEEPVLTQSYGWNIVQMKSGVDVFYKEAEPCDVVLCDIGECSSSPAVEADRSTKVLELAERWLERNDGADFCIKVLCPYMPEVVEKLSKLQLRYGGCLVRNPLSRNSTHEMYWVSGYKGNLIGVINSTSALLLRRMEIKFAEPRYEEDVNLSCGTRAVSIAPPKFDYKKIGQRVERLKAEHMSTWHYDCEHPYRTWAYHGSYVVKPSGSASSQVNGVVKLLSKPWDVSSEVTGMSMTDTTPFGQQRVFKEKVDTKAPEPPAGAEMASVIVSEWLWKRLNREKKPRLCTKEEFVRKVRGNAALGPVFEEENQWKDAAEAVQDPGFWNLVDMERKNHLEGKCETCVYNMMGKREKKRGEFGKAKGSRAIWYMWLGARFLEFEALGFLNEDHWMSRGNSGGGVEGLGIQKLGYVMREIGEKGGILYADDTAGWDTRITECDLRNEAHIMEYMENEHRKLARAIFELTYKHKVVKVMRPGKGVPLMDIISREDQRGSGQVVTYALNTFTNLVVQLIRMAEAECVLTPEDLHEMSQSAKLRLLKWLKEEGWERLTRMAVSGDDCVVAAPDARFGAALTFLNAMSKIRKDIKEWTPSKGWKNWEEVPFCSHHFHRLQMKDGRELVVPCRSQDELIGRARVTQGPGDLMSSACLAKAYAQMWQLLYFHRRDLRLMGNAICSAVPVDWVPTGRTTWSIHGKGEWMTSENMLEVWNRVWIEENEHMEDKTPVREWTDIPYLGKREDPWCGSYIGYRPRSTWAENIKVPVNVIRVKIGGNKYQDYLGTQKRYESEKRVEFRGVL.

Topologically, residues Met1–Ser103 are cytoplasmic. An interaction with host EXOC1 region spans residues Thr2–Asn15. Residues Leu38–Met73 are hydrophobic; homodimerization of capsid protein C. A propeptide spans Ser103–Ala119 (ER anchor for the capsid protein C, removed in mature form by serine protease NS3). The chain crosses the membrane as a helical span at residues Gly104–Leu124. Topologically, residues Glu125–Ser245 are extracellular. The chain crosses the membrane as a helical span at residues Trp246–Thr266. The Cytoplasmic portion of the chain corresponds to Ser267–Lys271. The helical transmembrane segment at Val272 to Ser286 threads the bilayer. Topologically, residues Ile287 to Leu739 are extracellular. 6 disulfides stabilise this stretch: Cys289–Cys316, Cys346–Cys402, Cys346–Cys407, Cys360–Cys391, Cys378–Cys402, and Cys378–Cys407. A fusion peptide region spans residues Asp384 to Gly397. N-linked (GlcNAc...) asparagine; by host glycosylation is present at Asn440. 2 cysteine pairs are disulfide-bonded: Cys476/Cys574 and Cys591/Cys622. A helical membrane pass occupies residues Phe740–Ile760. Topologically, residues Asn761–Thr766 are cytoplasmic. The chain crosses the membrane as a helical span at residues Ile767 to Ala787. Residues Asp788–Arg1165 lie on the Extracellular side of the membrane. Disulfide bonds link Cys791/Cys802, Cys842/Cys928, Cys964/Cys1009, Cys1066/Cys1115, Cys1077/Cys1098, Cys1077/Cys1099, Cys1098/Cys1102, and Cys1099/Cys1102. The N-linked (GlcNAc...) asparagine; by host glycan is linked to Asn915. A helical membrane pass occupies residues Ile1166 to Gly1186. The Cytoplasmic portion of the chain corresponds to Leu1187 to His1214. A helical membrane pass occupies residues Leu1215 to Gly1235. The Lumenal portion of the chain corresponds to Arg1236–Ser1242. The helical transmembrane segment at Leu1243 to Phe1263 threads the bilayer. Residues Glu1264–Thr1284 are Cytoplasmic-facing. A helical transmembrane segment spans residues Thr1285–Gly1305. Residues Thr1306–Ala1335 are Lumenal-facing. The chain crosses the membrane as a helical span at residues Val1336–Val1356. Over Thr1357–Ser1363 the chain is Cytoplasmic. Residues Trp1364 to Ala1384 form a helical membrane-spanning segment. The Lumenal segment spans residues Glu1385–Glu1387. The helical transmembrane segment at Val1388–Gly1408 threads the bilayer. Residues Arg1409 to Gly1464 lie on the Cytoplasmic side of the membrane. The interacts with and activates NS3 protease stretch occupies residues Ile1415–Pro1454. An intramembrane region (helical) is located at residues Leu1465 to Phe1485. The Cytoplasmic segment spans residues Leu1486–Met2158. Residues Ala1493–Glu1670 form the Peptidase S7 domain. Active-site charge relay system; for serine protease NS3 activity residues include His1543, Asp1567, and Ser1627. In terms of domain architecture, Helicase ATP-binding spans Asp1673–Glu1829. The tract at residues Arg1677–Glu1680 is important for RNA-binding. Residue Leu1686–Thr1693 participates in ATP binding. The DEAH box motif lies at Asp1777 to His1780. Positions Ser1839–Thr2006 constitute a Helicase C-terminal domain. Lys1881 bears the N6-acetyllysine; by host mark. A regulates the ATPase activity of NS3 helicase region spans residues Glu2153–Glu2157. The chain crosses the membrane as a helical span at residues Ile2159 to Leu2179. Topologically, residues Val2180 to Pro2185 are lumenal. Residues Gly2186 to Ala2205 constitute an intramembrane region (helical). Position 2206 (Gly2206) is a topological domain, lumenal. A helical transmembrane segment spans residues Val2207–Ile2227. The Cytoplasmic segment spans residues Pro2228–Ala2242. A helical membrane pass occupies residues Met2243 to Ala2257. Over Asn2258–Thr2293 the chain is Lumenal. Residues Ala2294–Val2314 constitute an intramembrane region (helical). Residues Thr2315–Asp2336 are Lumenal-facing. The chain crosses the membrane as a helical span at residues Ser2337–Thr2357. Residue Gln2358 is a topological domain, cytoplasmic. The chain crosses the membrane as a helical span at residues Ile2359–Leu2379. Residues Pro2380–Pro2420 are Lumenal-facing. The chain crosses the membrane as a helical span at residues Leu2421–Ile2441. The Cytoplasmic segment spans residues Thr2442–Leu3410. The mRNA cap 0-1 NS5-type MT domain maps to Gly2508–Ala2773. Ser2563 contributes to the S-adenosyl-L-methionine binding site. Phosphoserine is present on Ser2563. Lys2568 acts as the For 2'-O-MTase activity in catalysis. Residues Gly2593, Trp2594, Thr2611, Lys2612, Asp2638, and Val2639 each coordinate S-adenosyl-L-methionine. Residue Asp2653 is the For 2'-O-MTase activity of the active site. Ile2654 provides a ligand contact to S-adenosyl-L-methionine. Catalysis depends on for 2'-O-MTase activity residues Lys2690 and Glu2726. An S-adenosyl-L-methionine-binding site is contributed by Tyr2728. Residues Glu2947, His2951, Cys2956, and Cys2959 each coordinate Zn(2+). One can recognise a RdRp catalytic domain in the interval Gly3036 to Ala3187. Residues His3222, Cys3238, and Cys3356 each contribute to the Zn(2+) site.

The protein in the N-terminal section; belongs to the class I-like SAM-binding methyltransferase superfamily. mRNA cap 0-1 NS5-type methyltransferase family. As to quaternary structure, homodimer. Interacts (via N-terminus) with host EXOC1 (via C-terminus); this interaction results in EXOC1 degradation through the proteasome degradation pathway. Forms heterodimers with envelope protein E in the endoplasmic reticulum and Golgi. In terms of assembly, homodimer; in the endoplasmic reticulum and Golgi. Interacts with protein prM. Interacts with non-structural protein 1. As to quaternary structure, homodimer; Homohexamer when secreted. Interacts with envelope protein E. NS1 interacts with NS4B. Interacts with host complement protein CFH; this interaction leads to the degradation of C3. Interacts (via N-terminus) with serine protease NS3. In terms of assembly, forms a heterodimer with serine protease NS3. May form homooligomers. As to quaternary structure, forms a heterodimer with NS2B. Interacts with non-structural protein 2A (via N-terminus). Interacts with NS4B. Interacts with unphosphorylated RNA-directed RNA polymerase NS5; this interaction stimulates RNA-directed RNA polymerase NS5 guanylyltransferase activity. Interacts with serine protease NS3. In terms of assembly, homodimer. Interacts with host STAT2; this interaction inhibits the phosphorylation of the latter, and, when all viral proteins are present (polyprotein), targets STAT2 for degradation. Specific enzymatic cleavages in vivo yield mature proteins. Cleavages in the lumen of endoplasmic reticulum are performed by host signal peptidase, whereas cleavages in the cytoplasmic side are performed by serine protease NS3. Signal cleavage at the 2K-4B site requires a prior NS3 protease-mediated cleavage at the 4A-2K site. Post-translationally, cleaved in post-Golgi vesicles by a host furin, releasing the mature small envelope protein M, and peptide pr. This cleavage is incomplete as up to 30% of viral particles still carry uncleaved prM. In terms of processing, N-glycosylated. N-glycosylated. The excreted form is glycosylated and this is required for efficient secretion of the protein from infected cells. Post-translationally, acetylated by host KAT5. Acetylation modulates NS3 RNA-binding and unwinding activities and plays an important positive role for viral replication. In terms of processing, phosphorylated on serines residues. This phosphorylation may trigger NS5 nuclear localization.

The protein localises to the virion. It localises to the host nucleus. Its subcellular location is the host cytoplasm. It is found in the host perinuclear region. The protein resides in the secreted. The protein localises to the virion membrane. It localises to the host endoplasmic reticulum membrane. It carries out the reaction Selective hydrolysis of -Xaa-Xaa-|-Yaa- bonds in which each of the Xaa can be either Arg or Lys and Yaa can be either Ser or Ala.. The enzyme catalyses RNA(n) + a ribonucleoside 5'-triphosphate = RNA(n+1) + diphosphate. The catalysed reaction is a ribonucleoside 5'-triphosphate + H2O = a ribonucleoside 5'-diphosphate + phosphate + H(+). It catalyses the reaction ATP + H2O = ADP + phosphate + H(+). It carries out the reaction a 5'-end (5'-triphosphoguanosine)-ribonucleoside in mRNA + S-adenosyl-L-methionine = a 5'-end (N(7)-methyl 5'-triphosphoguanosine)-ribonucleoside in mRNA + S-adenosyl-L-homocysteine. The enzyme catalyses a 5'-end (N(7)-methyl 5'-triphosphoguanosine)-ribonucleoside in mRNA + S-adenosyl-L-methionine = a 5'-end (N(7)-methyl 5'-triphosphoguanosine)-(2'-O-methyl-ribonucleoside) in mRNA + S-adenosyl-L-homocysteine + H(+). Functionally, plays a role in virus budding by binding to the cell membrane and gathering the viral RNA into a nucleocapsid that forms the core of a mature virus particle. During virus entry, may induce genome penetration into the host cytoplasm after hemifusion induced by the surface proteins. Can migrate to the cell nucleus where it modulates host functions. Overcomes the anti-viral effects of host EXOC1 by sequestering and degrading the latter through the proteasome degradation pathway. Its function is as follows. Inhibits RNA silencing by interfering with host Dicer. Prevents premature fusion activity of envelope proteins in trans-Golgi by binding to envelope protein E at pH6.0. After virion release in extracellular space, gets dissociated from E dimers. In terms of biological role, acts as a chaperone for envelope protein E during intracellular virion assembly by masking and inactivating envelope protein E fusion peptide. prM is the only viral peptide matured by host furin in the trans-Golgi network probably to avoid catastrophic activation of the viral fusion activity in acidic Golgi compartment prior to virion release. prM-E cleavage is inefficient, and many virions are only partially matured. These uncleaved prM would play a role in immune evasion. Functionally, may play a role in virus budding. Exerts cytotoxic effects by activating a mitochondrial apoptotic pathway through M ectodomain. May display a viroporin activity. Its function is as follows. Binds to host cell surface receptor and mediates fusion between viral and cellular membranes. Envelope protein is synthesized in the endoplasmic reticulum in the form of heterodimer with protein prM. They play a role in virion budding in the ER, and the newly formed immature particle is covered with 60 spikes composed of heterodimer between precursor prM and envelope protein E. The virion is transported to the Golgi apparatus where the low pH causes dissociation of PrM-E heterodimers and formation of E homodimers. prM-E cleavage is inefficient, and many virions are only partially matured. These uncleaved prM would play a role in immune evasion. Involved in immune evasion, pathogenesis and viral replication. Once cleaved off the polyprotein, is targeted to three destinations: the viral replication cycle, the plasma membrane and the extracellular compartment. Essential for viral replication. Required for formation of the replication complex and recruitment of other non-structural proteins to the ER-derived membrane structures. Excreted as a hexameric lipoparticle that plays a role against host immune response. Antagonizing the complement function. Binds to the host macrophages and dendritic cells. Inhibits signal transduction originating from Toll-like receptor 3 (TLR3). In terms of biological role, component of the viral RNA replication complex that functions in virion assembly and antagonizes the host alpha/beta interferon antiviral response. Functionally, required cofactor for the serine protease function of NS3. May have membrane-destabilizing activity and form viroporins. Its function is as follows. Displays three enzymatic activities: serine protease, NTPase and RNA helicase. NS3 serine protease, in association with NS2B, performs its autocleavage and cleaves the polyprotein at dibasic sites in the cytoplasm: C-prM, NS2A-NS2B, NS2B-NS3, NS3-NS4A, NS4A-2K and NS4B-NS5. NS3 RNA helicase binds RNA and unwinds dsRNA in the 3' to 5' direction. Regulates the ATPase activity of the NS3 helicase activity. NS4A allows NS3 helicase to conserve energy during unwinding. In terms of biological role, functions as a signal peptide for NS4B and is required for the interferon antagonism activity of the latter. Functionally, induces the formation of ER-derived membrane vesicles where the viral replication takes place. Inhibits interferon (IFN)-induced host STAT1 phosphorylation and nuclear translocation, thereby preventing the establishment of cellular antiviral state by blocking the IFN-alpha/beta pathway. Inhibits STAT2 translocation in the nucleus after IFN-alpha treatment. Its function is as follows. Replicates the viral (+) and (-) RNA genome, and performs the capping of genomes in the cytoplasm. NS5 methylates viral RNA cap at guanine N-7 and ribose 2'-O positions. Besides its role in RNA genome replication, also prevents the establishment of cellular antiviral state by blocking the interferon-alpha/beta (IFN-alpha/beta) signaling pathway. Inhibits host TYK2 and STAT2 phosphorylation, thereby preventing activation of JAK-STAT signaling pathway. The sequence is that of Genome polyprotein from Kokobera virus (KOKV).